The following is a 320-amino-acid chain: Aspartate carbamoyltransferase catalytic subunit (320 aa).

Residues Arg58 and Thr59 each coordinate carbamoyl phosphate. Lys86 is a binding site for L-aspartate. Positions 108, 136, and 139 each coordinate carbamoyl phosphate. The L-aspartate site is built by Arg169 and Arg223. The carbamoyl phosphate site is built by Gly264 and Pro265.

This sequence belongs to the aspartate/ornithine carbamoyltransferase superfamily. ATCase family. Heterododecamer (2C3:3R2) of six catalytic PyrB chains organized as two trimers (C3), and six regulatory PyrI chains organized as three dimers (R2).

The enzyme catalyses carbamoyl phosphate + L-aspartate = N-carbamoyl-L-aspartate + phosphate + H(+). The protein operates within pyrimidine metabolism; UMP biosynthesis via de novo pathway; (S)-dihydroorotate from bicarbonate: step 2/3. Catalyzes the condensation of carbamoyl phosphate and aspartate to form carbamoyl aspartate and inorganic phosphate, the committed step in the de novo pyrimidine nucleotide biosynthesis pathway. The chain is Aspartate carbamoyltransferase catalytic subunit from Cereibacter sphaeroides (strain ATCC 17025 / ATH 2.4.3) (Rhodobacter sphaeroides).